Here is a 303-residue protein sequence, read N- to C-terminus: Target of rapamycin complex subunit LST8 (303 aa).

WD repeat units lie at residues 1–27 (MSVILVSAGYDHTIRFWEALTGVCSRT), 30–68 (HSDSQVNRLEITNDKKLLATAGHQNVRLYDIRTTNPNPV), 73–112 (GHRGNVTSVSFQQDNRWMVTSSEDGTIKVWDVRSPSIPRN), 114–153 (KHNAPVNEVVIHPNQGELISCDRDGNIRIWDLGENQCTHQ), 157–196 (EDDTSLQSLSMASDGSMLAAANTKGNCYVWEMPNHTDASH), 205–244 (AHSTYITRILLSSDVKHLATCSADHTARVWSIDDDFKLET), and 248–287 (GHQRWVWDCAFSADSAYLVTASSDHYVRLWDLSTREIVRQ).

The protein belongs to the WD repeat LST8 family. In terms of assembly, the target of rapamycin complex 1 (TORC1) is composed of at least KOG1, LST8, TCO89 and either TOR1 (TORC1-A) or TOR2 (TORC1-B). TORC1 binds to and is inhibited by FKBP-rapamycin. Interacts with PIB2; following activation of PIB2 by glutamine or cysteine and as part of the TORC1 complex. The target of rapamycin complex 2 (TORC2) is composed of at least AVO1, AVO2, BIT61, LST8, TOR2 and TSC11. TORC2 forms a homodimer. Contrary to TORC1, TORC2 does not bind to and is not sensitive to FKBP-rapamycin. LST8 binds to the C-terminal kinase domain in TOR2.

The protein localises to the cell membrane. It is found in the vacuole membrane. Essential component of both TORC1 and TORC2. TORC1 regulates multiple cellular processes to control cell growth in response to environmental signals. Nutrient limitation and environmental stress signals cause inactivation of TORC1. Active TORC1 positively controls ribosome biogenesis via control of rRNA, ribosomal protein and tRNA gene expression, and rRNA processing. TORC1 positively controls protein biosynthesis by regulation of mRNA stability, translation initiation factor activity, and high-affinity amino acid permeases that serve to provide amino acids for use by the translation machinery. TORC1 also promotes growth by sequestering a number of nutrient and general stress-responsive transcription factors in the cytoplasm. TORC1 negatively controls macroautophagy, a process to recycle surplus cytoplasmic mass under nutrient starvation conditions. LST8 is involved in the negative regulation of transcription factors GLN3 and RTG1-RTG3, limiting the synthesis of alpha-ketoglutarate, glutamate and glutamine. LST8 is required for targeting of amino acid permeases (AAPs) to the plasma membrane. TORC2 regulates cell cycle-dependent polarization of the actin-cytoskeleton, cell wall integrity, and receptor endocytosis. TORC2 controls polarity of the actin cytoskeleton, which is required for orienting the secretory pathway toward discrete growth sites, via the RHO1/PKC1/MAPK cell integrity pathway. LST8 is involved in maintenance of cell wall integrity. LST8 modulates TOR2 kinase activity. This Saccharomyces cerevisiae (strain ATCC 204508 / S288c) (Baker's yeast) protein is Target of rapamycin complex subunit LST8.